A 742-amino-acid polypeptide reads, in one-letter code: Enhancer of polycomb-like protein 1 (742 aa).

Positions 1–27 are enriched in polar residues; the sequence is MPTPSAQLDQGIISSNGGTSGVSASST. 3 disordered regions span residues 1 to 28, 416 to 446, and 718 to 742; these read MPTPSAQLDQGIISSNGGTSGVSASSTR, RQQSQLQKLDQQQRQQQQQQQPQINGAQCQQ, and KKLVNAQRQQQQQQQEQQEQEHQQA. Residues 724 to 734 are compositionally biased toward low complexity; it reads QRQQQQQQQEQ.

Belongs to the enhancer of polycomb family. In terms of assembly, component of the NuA4 histone acetyltransferase complex.

Its subcellular location is the nucleus. Its function is as follows. Component of the NuA4 histone acetyltransferase complex which is involved in transcriptional activation of selected genes principally by acetylation of nucleosomal histone H4 and H2A. The NuA4 complex is also involved in DNA repair. Involved in gene silencing by neighboring heterochromatin, blockage of the silencing spreading along the chromosome, and required for cell cycle progression through G2/M. This Eremothecium gossypii (strain ATCC 10895 / CBS 109.51 / FGSC 9923 / NRRL Y-1056) (Yeast) protein is Enhancer of polycomb-like protein 1 (EPL1).